The chain runs to 196 residues: Molybdenum cofactor guanylyltransferase (196 aa).

GTP is bound by residues 12 to 14 (LAG), K25, N53, D71, and D101. A Mg(2+)-binding site is contributed by D101.

It belongs to the MobA family. Monomer. Mg(2+) serves as cofactor.

The protein localises to the cytoplasm. It catalyses the reaction Mo-molybdopterin + GTP + H(+) = Mo-molybdopterin guanine dinucleotide + diphosphate. Functionally, transfers a GMP moiety from GTP to Mo-molybdopterin (Mo-MPT) cofactor (Moco or molybdenum cofactor) to form Mo-molybdopterin guanine dinucleotide (Mo-MGD) cofactor. This chain is Molybdenum cofactor guanylyltransferase, found in Bordetella petrii (strain ATCC BAA-461 / DSM 12804 / CCUG 43448).